The following is a 401-amino-acid chain: Elongation factor Tu (401 aa).

The tr-type G domain occupies 10 to 209; sequence KPHINVGTIG…AVDEYIPTPQ (200 aa). Residues 19 to 26 are G1; the sequence is GHVDHGKT. Position 19-26 (19-26) interacts with GTP; sequence GHVDHGKT. A Mg(2+)-binding site is contributed by Thr26. A G2 region spans residues 60–64; the sequence is GITIA. The segment at 81 to 84 is G3; it reads DCPG. GTP contacts are provided by residues 81-85 and 136-139; these read DCPGH and NKVD. The segment at 136–139 is G4; the sequence is NKVD. A G5 region spans residues 174 to 176; it reads SAR.

It belongs to the TRAFAC class translation factor GTPase superfamily. Classic translation factor GTPase family. EF-Tu/EF-1A subfamily. As to quaternary structure, monomer.

It is found in the cytoplasm. The catalysed reaction is GTP + H2O = GDP + phosphate + H(+). GTP hydrolase that promotes the GTP-dependent binding of aminoacyl-tRNA to the A-site of ribosomes during protein biosynthesis. The polypeptide is Elongation factor Tu (Chloroflexus aurantiacus (strain ATCC 29366 / DSM 635 / J-10-fl)).